The chain runs to 137 residues: Large ribosomal subunit protein uL16 (137 aa).

Belongs to the universal ribosomal protein uL16 family. Part of the 50S ribosomal subunit.

Its function is as follows. Binds 23S rRNA and is also seen to make contacts with the A and possibly P site tRNAs. The polypeptide is Large ribosomal subunit protein uL16 (Methylococcus capsulatus (strain ATCC 33009 / NCIMB 11132 / Bath)).